Here is a 612-residue protein sequence, read N- to C-terminus: Serine/threonine-protein kinase Nek1 (612 aa).

The 255-residue stretch at 4 to 258 (YEFLEQIGKG…ASDLLRHPHL (255 aa)) folds into the Protein kinase domain. ATP contacts are provided by residues 10–18 (IGKGSFGSA) and K33. The Proton acceptor role is filled by D129. Over residues 503-513 (ISDGSSSSDQN) the composition is skewed to polar residues. Residues 503–534 (ISDGSSSSDQNATAGASSHTTSSSSRRCRFDP) are disordered. Over residues 514–527 (ATAGASSHTTSSSS) the composition is skewed to low complexity.

This sequence belongs to the protein kinase superfamily. NEK Ser/Thr protein kinase family. NIMA subfamily.

It carries out the reaction L-seryl-[protein] + ATP = O-phospho-L-seryl-[protein] + ADP + H(+). The catalysed reaction is L-threonyl-[protein] + ATP = O-phospho-L-threonyl-[protein] + ADP + H(+). May be involved in plant development processes. This is Serine/threonine-protein kinase Nek1 (NEK1) from Arabidopsis thaliana (Mouse-ear cress).